A 252-amino-acid chain; its full sequence is Phosphoglycolate phosphatase (252 aa).

The active-site Nucleophile is the Asp-13. Residues Asp-13, Asp-15, and Asp-192 each coordinate Mg(2+).

Belongs to the HAD-like hydrolase superfamily. CbbY/CbbZ/Gph/YieH family. As to quaternary structure, monomer. Mg(2+) is required as a cofactor. The cofactor is chloride.

It carries out the reaction 2-phosphoglycolate + H2O = glycolate + phosphate. It functions in the pathway organic acid metabolism; glycolate biosynthesis; glycolate from 2-phosphoglycolate: step 1/1. In terms of biological role, specifically catalyzes the dephosphorylation of 2-phosphoglycolate. Is involved in the dissimilation of the intracellular 2-phosphoglycolate formed during the DNA repair of 3'-phosphoglycolate ends, a major class of DNA lesions induced by oxidative stress. The protein is Phosphoglycolate phosphatase of Salmonella choleraesuis (strain SC-B67).